A 157-amino-acid polypeptide reads, in one-letter code: Putative pre-16S rRNA nuclease (157 aa).

The protein belongs to the YqgF nuclease family.

It is found in the cytoplasm. In terms of biological role, could be a nuclease involved in processing of the 5'-end of pre-16S rRNA. The chain is Putative pre-16S rRNA nuclease from Ruegeria sp. (strain TM1040) (Silicibacter sp.).